The following is a 39-amino-acid chain: Conotoxin ArMSGL-013 (39 aa).

Positions Arg-1–Thr-5 are excised as a propeptide. Disulfide bonds link Cys-12-Cys-24, Cys-16-Cys-33, and Cys-23-Cys-37. At Trp-38 the chain carries Tryptophan amide.

This sequence belongs to the conotoxin O3 superfamily. As to expression, expressed by the venom duct.

The protein localises to the secreted. This is Conotoxin ArMSGL-013 from Conus arenatus (Sand-dusted cone).